The primary structure comprises 270 residues: Glutamate racemase (270 aa).

Residues 10–11 (DS) and 42–43 (YG) each bind substrate. The active-site Proton donor/acceptor is the cysteine 74. Residue 75–76 (NT) participates in substrate binding. The Proton donor/acceptor role is filled by cysteine 189. Position 190–191 (190–191 (TH)) interacts with substrate.

It belongs to the aspartate/glutamate racemases family.

The enzyme catalyses L-glutamate = D-glutamate. It participates in cell wall biogenesis; peptidoglycan biosynthesis. Provides the (R)-glutamate required for cell wall biosynthesis. In Bartonella quintana (strain Toulouse) (Rochalimaea quintana), this protein is Glutamate racemase.